The sequence spans 453 residues: Pup--protein ligase (453 aa).

Residue glutamate 9 participates in Mg(2+) binding. Arginine 53 contacts ATP. Tyrosine 55 provides a ligand contact to Mg(2+). The active-site Proton acceptor is aspartate 57. Glutamate 63 contributes to the Mg(2+) binding site. The ATP site is built by threonine 66 and tryptophan 420.

It belongs to the Pup ligase/Pup deamidase family. Pup-conjugating enzyme subfamily.

The catalysed reaction is ATP + [prokaryotic ubiquitin-like protein]-L-glutamate + [protein]-L-lysine = ADP + phosphate + N(6)-([prokaryotic ubiquitin-like protein]-gamma-L-glutamyl)-[protein]-L-lysine.. The protein operates within protein degradation; proteasomal Pup-dependent pathway. Its pathway is protein modification; protein pupylation. In terms of biological role, catalyzes the covalent attachment of the prokaryotic ubiquitin-like protein modifier Pup to the proteasomal substrate proteins, thereby targeting them for proteasomal degradation. This tagging system is termed pupylation. The ligation reaction involves the side-chain carboxylate of the C-terminal glutamate of Pup and the side-chain amino group of a substrate lysine. In Kribbella flavida (strain DSM 17836 / JCM 10339 / NBRC 14399), this protein is Pup--protein ligase.